A 975-amino-acid chain; its full sequence is Importin-11 (975 aa).

M1 is subject to N-acetylmethionine. The region spanning 28–100 is the Importin N-terminal domain; the sequence is AEEQLKQWET…RAGLITNFNE (73 aa). 14 HEAT repeats span residues 123 to 160, 283 to 317, 318 to 356, 422 to 459, 473 to 509, 511 to 548, 555 to 593, 600 to 636, 640 to 677, 683 to 720, 731 to 773, 819 to 849, 850 to 887, and 957 to 974; these read RQWP…TLAS, QHPI…ERFI, VQCM…KMAF, QTLT…AVGL, WFKT…VKFK, DLRP…DFEF, PYLE…RVNV, GCLV…GLGA, NLYP…TLEN, PELL…SSTE, QSFY…ILPC, QEMD…KLSA, LALL…EDPE, and METV…FLQG. The residue at position 343 (S343) is a Phosphoserine.

The protein belongs to the importin beta family. In terms of assembly, interacts with UBE2E3 and RPL12.

Its subcellular location is the cytoplasm. The protein localises to the nucleus. Functions in nuclear protein import as nuclear transport receptor. Serves as receptor for nuclear localization signals (NLS) in cargo substrates. Is thought to mediate docking of the importin/substrate complex to the nuclear pore complex (NPC) through binding to nucleoporin and the complex is subsequently translocated through the pore by an energy requiring, Ran-dependent mechanism. At the nucleoplasmic side of the NPC, Ran binds to the importin, the importin/substrate complex dissociates and importin is re-exported from the nucleus to the cytoplasm where GTP hydrolysis releases Ran. The directionality of nuclear import is thought to be conferred by an asymmetric distribution of the GTP- and GDP-bound forms of Ran between the cytoplasm and nucleus. Mediates the nuclear import of RPL12, and of UBE2E3. The sequence is that of Importin-11 (Ipo11) from Mus musculus (Mouse).